Reading from the N-terminus, the 723-residue chain is UPF0313 protein YgiQ (723 aa).

The Radical SAM core domain occupies Ala372 to Ala650. [4Fe-4S] cluster-binding residues include Cys386, Cys390, and Cys393. The segment at Glu686–Arg723 is disordered. The span at Asn714–Arg723 shows a compositional bias: basic residues.

Belongs to the UPF0313 family. It depends on [4Fe-4S] cluster as a cofactor.

The protein is UPF0313 protein YgiQ of Salmonella typhimurium (strain LT2 / SGSC1412 / ATCC 700720).